A 539-amino-acid polypeptide reads, in one-letter code: Probable 1,4-beta-D-glucan cellobiohydrolase B (539 aa).

Residues 1–26 form the signal peptide; the sequence is MLPSTISYRIYKNALFFAALFGAVQA. The interval 27–461 is catalytic; it reads QKVGTSKAEV…SNIKVGPIGS (435 aa). Asparagine 90 is a glycosylation site (N-linked (GlcNAc...) asparagine). The Nucleophile role is filled by glutamate 238. Glutamate 243 (proton donor) is an active-site residue. N-linked (GlcNAc...) asparagine glycosylation is found at asparagine 296 and asparagine 495. Residues 462–503 are thr-rich linker; it reads TFNSGGSNPGGSTTTTKPATSTTTTKATTTATTNTTGPTGTG. Residues 462 to 503 are compositionally biased toward low complexity; it reads TFNSGGSNPGGSTTTTKPATSTTTTKATTTATTNTTGPTGTG. The segment at 462-504 is disordered; it reads TFNSGGSNPGGSTTTTKPATSTTTTKATTTATTNTTGPTGTGV. The region spanning 503–539 is the CBM1 domain; sequence GVAQPWAQCGGIGYSGPTQCAAPYTCTKQNDYYSQCL. Disulfide bonds link cysteine 511-cysteine 528 and cysteine 522-cysteine 538.

It belongs to the glycosyl hydrolase 7 (cellulase C) family.

The protein localises to the secreted. The enzyme catalyses Hydrolysis of (1-&gt;4)-beta-D-glucosidic linkages in cellulose and cellotetraose, releasing cellobiose from the non-reducing ends of the chains.. Its function is as follows. The biological conversion of cellulose to glucose generally requires three types of hydrolytic enzymes: (1) Endoglucanases which cut internal beta-1,4-glucosidic bonds; (2) Exocellobiohydrolases that cut the disaccharide cellobiose from the non-reducing end of the cellulose polymer chain; (3) Beta-1,4-glucosidases which hydrolyze the cellobiose and other short cello-oligosaccharides to glucose. In Aspergillus clavatus (strain ATCC 1007 / CBS 513.65 / DSM 816 / NCTC 3887 / NRRL 1 / QM 1276 / 107), this protein is Probable 1,4-beta-D-glucan cellobiohydrolase B (cbhB).